A 427-amino-acid chain; its full sequence is Beta-porphyranase D (427 aa).

An N-terminal signal peptide occupies residues 1 to 19 (MILKQAILTLVLVNANLFA). The segment at 23–45 (PKTYSSTDKETRQGPPKPPMGKR) is disordered. In terms of domain architecture, GH16 spans 32–308 (ETRQGPPKPP…WVRAYRLVDV (277 aa)). 5 residues coordinate substrate: Trp73, Arg76, Glu168, Glu173, and Glu272. The Nucleophile role is filled by Glu168. Glu173 (proton donor) is an active-site residue.

The protein belongs to the glycosyl hydrolase 16 family.

The protein localises to the periplasm. It carries out the reaction Hydrolysis of beta-D-galactopyranose-(1-&gt;4)-alpha-L-galactopyranose-6-sulfate linkages in porphyran.. Cleaves the sulfated polysaccharide porphyran at the (1-&gt;4) linkages between beta-D-galactopyranose and alpha-L-galactopyranose-6-sulfate, forming mostly the disaccharide alpha-L-galactopyranose-6-sulfate-(1-&gt;3)-beta-D-galactose. This Zobellia galactanivorans (strain DSM 12802 / CCUG 47099 / CIP 106680 / NCIMB 13871 / Dsij) protein is Beta-porphyranase D (porD).